Consider the following 361-residue polypeptide: Fructose-bisphosphate aldolase (361 aa).

Residue Ser-63 participates in D-glyceraldehyde 3-phosphate binding. The active-site Proton donor is the Asp-110. 4 residues coordinate Zn(2+): His-111, Asp-145, Glu-175, and His-227. Gly-228 contacts dihydroxyacetone phosphate. His-266 provides a ligand contact to Zn(2+). Residues 267–269 and 288–291 each bind dihydroxyacetone phosphate; these read GGS and NLDT.

It belongs to the class II fructose-bisphosphate aldolase family. In terms of assembly, homodimer. Zn(2+) is required as a cofactor.

The enzyme catalyses beta-D-fructose 1,6-bisphosphate = D-glyceraldehyde 3-phosphate + dihydroxyacetone phosphate. It functions in the pathway carbohydrate degradation; glycolysis; D-glyceraldehyde 3-phosphate and glycerone phosphate from D-glucose: step 4/4. In terms of biological role, catalyzes the aldol condensation of dihydroxyacetone phosphate (DHAP or glycerone-phosphate) with glyceraldehyde 3-phosphate (G3P) to form fructose 1,6-bisphosphate (FBP) in gluconeogenesis and the reverse reaction in glycolysis. This chain is Fructose-bisphosphate aldolase (FBA1), found in Kluyveromyces lactis (strain ATCC 8585 / CBS 2359 / DSM 70799 / NBRC 1267 / NRRL Y-1140 / WM37) (Yeast).